The primary structure comprises 132 residues: UPF0299 membrane protein YohJ (132 aa).

Helical transmembrane passes span 7-27 (IIWQYLRAFVLIYACLYAGIF), 31-51 (LLPVTIPGSIIGMLILFVLLA), 63-83 (GCYVLIRYMALLFVPIGVGVM), and 93-113 (FGPVVVSCAVCTLVVFLVVSW).

It belongs to the UPF0299 family.

Its subcellular location is the cell inner membrane. This Shigella boydii serotype 18 (strain CDC 3083-94 / BS512) protein is UPF0299 membrane protein YohJ.